The chain runs to 73 residues: UPF0346 protein SAS1364 (73 aa).

Belongs to the UPF0346 family.

In Staphylococcus aureus (strain MSSA476), this protein is UPF0346 protein SAS1364.